Reading from the N-terminus, the 330-residue chain is MNRESAKQLVLTDRFGRTVDYVRIAVTSACNLRCTYCLKEDAPTQTQQLDVVETSKLIALLAGMGVRKIRFTGGEPLLHPSIPELVRIAKATPGIDTVCITTNGVLLDRQLDALVEAGLDGVNLSLDTLDREKFTSITRRDRFEQVSKALDRLLATPSLTVKLNTLMLRGINNDEIPAFVELTREHDLTVRFMELQPFDDHQIWRTGRFMGAERIRERLADAYPELEAITGHSTEHYSFSLPGHRGSIAIIPAFSRNFCSSCSKLRITADARLISCLYHHESIDLAPALKGEMNEVELKKRIIEAVQQKPKDGLKSSHDTAASSMSQIGG.

One can recognise a Radical SAM core domain in the interval 14 to 225; sequence RFGRTVDYVR…RERLADAYPE (212 aa). Arginine 23 is a binding site for GTP. Residues cysteine 30 and cysteine 34 each contribute to the [4Fe-4S] cluster site. Residue tyrosine 36 participates in S-adenosyl-L-methionine binding. Cysteine 37 contacts [4Fe-4S] cluster. Arginine 70 lines the GTP pocket. Position 74 (glycine 74) interacts with S-adenosyl-L-methionine. A GTP-binding site is contributed by threonine 101. Residue serine 125 participates in S-adenosyl-L-methionine binding. Lysine 162 contributes to the GTP binding site. Residues cysteine 259 and cysteine 262 each coordinate [4Fe-4S] cluster. 264-266 contacts GTP; sequence KLR. Cysteine 276 serves as a coordination point for [4Fe-4S] cluster. Residues 309 to 318 show a composition bias toward basic and acidic residues; it reads KPKDGLKSSH. The segment at 309 to 330 is disordered; sequence KPKDGLKSSHDTAASSMSQIGG. The span at 319-330 shows a compositional bias: polar residues; it reads DTAASSMSQIGG.

Belongs to the radical SAM superfamily. MoaA family. Monomer and homodimer. It depends on [4Fe-4S] cluster as a cofactor.

It carries out the reaction GTP + AH2 + S-adenosyl-L-methionine = (8S)-3',8-cyclo-7,8-dihydroguanosine 5'-triphosphate + 5'-deoxyadenosine + L-methionine + A + H(+). The protein operates within cofactor biosynthesis; molybdopterin biosynthesis. Its function is as follows. Catalyzes the cyclization of GTP to (8S)-3',8-cyclo-7,8-dihydroguanosine 5'-triphosphate. This is GTP 3',8-cyclase from Chlorobaculum tepidum (strain ATCC 49652 / DSM 12025 / NBRC 103806 / TLS) (Chlorobium tepidum).